Here is a 310-residue protein sequence, read N- to C-terminus: MDWKQKKIGVLYGGLSEEREVSLRSGQALFVALQSLGYQVVAIDVDRHITKVLEREGIEVAVLALHGPMGEDGTIQGLLEFMGIPYTGPNVAASAICMDKGLSKRLFHSEGLPTPAWIELAGDHEEADELVDHFLGDFHGAAFVKPLDSGSSVGISRAVGKDELIRGVAKALSVSHRCMVERAIEGRELTLSILDGEAFPLIEIVPIDGFYDYDHKYTAGRTNYLVPAPNLDDKSLEAVVKIGLAAYHITGCRGLVRADFILDGEGTPWLLELNTIPGMTELSLAPKAAHAVGIEMPQLAERILQGARLK.

Residues 104 to 305 enclose the ATP-grasp domain; sequence KRLFHSEGLP…MPQLAERILQ (202 aa). 135-190 provides a ligand contact to ATP; sequence LGDFHGAAFVKPLDSGSSVGISRAVGKDELIRGVAKALSVSHRCMVERAIEGRELT. Mg(2+) contacts are provided by aspartate 259, glutamate 272, and asparagine 274.

It belongs to the D-alanine--D-alanine ligase family. It depends on Mg(2+) as a cofactor. Mn(2+) serves as cofactor.

The protein localises to the cytoplasm. The enzyme catalyses 2 D-alanine + ATP = D-alanyl-D-alanine + ADP + phosphate + H(+). Its pathway is cell wall biogenesis; peptidoglycan biosynthesis. Functionally, cell wall formation. In Magnetococcus marinus (strain ATCC BAA-1437 / JCM 17883 / MC-1), this protein is D-alanine--D-alanine ligase.